The following is a 598-amino-acid chain: Aspartate--tRNA(Asp/Asn) ligase (598 aa).

Glutamate 182 provides a ligand contact to L-aspartate. The aspartate stretch occupies residues 206-209; it reads QIFK. Arginine 228 contributes to the L-aspartate binding site. Residues 228–230 and glutamine 237 each bind ATP; that span reads RDE. Histidine 456 is an L-aspartate binding site. Residue glutamate 490 participates in ATP binding. Arginine 497 serves as a coordination point for L-aspartate. ATP is bound at residue 542-545; sequence GLDR.

Belongs to the class-II aminoacyl-tRNA synthetase family. Type 1 subfamily. Homodimer.

It is found in the cytoplasm. It catalyses the reaction tRNA(Asx) + L-aspartate + ATP = L-aspartyl-tRNA(Asx) + AMP + diphosphate. Aspartyl-tRNA synthetase with relaxed tRNA specificity since it is able to aspartylate not only its cognate tRNA(Asp) but also tRNA(Asn). Reaction proceeds in two steps: L-aspartate is first activated by ATP to form Asp-AMP and then transferred to the acceptor end of tRNA(Asp/Asn). This Lachnoclostridium phytofermentans (strain ATCC 700394 / DSM 18823 / ISDg) (Clostridium phytofermentans) protein is Aspartate--tRNA(Asp/Asn) ligase.